Consider the following 660-residue polypeptide: Bifunctional polymyxin resistance protein ArnA (660 aa).

The tract at residues 1 to 304 (MKAVIFAYHD…TLGLVAGARL (304 aa)) is formyltransferase ArnAFT. Residue His-104 is the Proton donor; for formyltransferase activity of the active site. (6R)-10-formyltetrahydrofolate-binding positions include Arg-114 and 136–140 (VKRAD). Residues 314-660 (RRIRVLILGV…RSVDVAERAS (347 aa)) form a dehydrogenase ArnADH region. Residues Asp-347 and 368 to 369 (DI) contribute to the NAD(+) site. UDP-alpha-D-glucuronate-binding positions include Ala-393, Tyr-398, and 432-433 (TS). The Proton acceptor; for decarboxylase activity role is filled by Glu-434. UDP-alpha-D-glucuronate-binding positions include Arg-460, Asn-492, 526 to 535 (KLIDGGQQKR), and Tyr-613. Arg-619 serves as the catalytic Proton donor; for decarboxylase activity.

In the N-terminal section; belongs to the Fmt family. UDP-L-Ara4N formyltransferase subfamily. It in the C-terminal section; belongs to the NAD(P)-dependent epimerase/dehydratase family. UDP-glucuronic acid decarboxylase subfamily. As to quaternary structure, homohexamer, formed by a dimer of trimers.

It carries out the reaction UDP-alpha-D-glucuronate + NAD(+) = UDP-beta-L-threo-pentopyranos-4-ulose + CO2 + NADH. The catalysed reaction is UDP-4-amino-4-deoxy-beta-L-arabinose + (6R)-10-formyltetrahydrofolate = UDP-4-deoxy-4-formamido-beta-L-arabinose + (6S)-5,6,7,8-tetrahydrofolate + H(+). Its pathway is nucleotide-sugar biosynthesis; UDP-4-deoxy-4-formamido-beta-L-arabinose biosynthesis; UDP-4-deoxy-4-formamido-beta-L-arabinose from UDP-alpha-D-glucuronate: step 1/3. The protein operates within nucleotide-sugar biosynthesis; UDP-4-deoxy-4-formamido-beta-L-arabinose biosynthesis; UDP-4-deoxy-4-formamido-beta-L-arabinose from UDP-alpha-D-glucuronate: step 3/3. It functions in the pathway bacterial outer membrane biogenesis; lipopolysaccharide biosynthesis. Bifunctional enzyme that catalyzes the oxidative decarboxylation of UDP-glucuronic acid (UDP-GlcUA) to UDP-4-keto-arabinose (UDP-Ara4O) and the addition of a formyl group to UDP-4-amino-4-deoxy-L-arabinose (UDP-L-Ara4N) to form UDP-L-4-formamido-arabinose (UDP-L-Ara4FN). The modified arabinose is attached to lipid A and is required for resistance to polymyxin and cationic antimicrobial peptides. The polypeptide is Bifunctional polymyxin resistance protein ArnA (Salmonella enteritidis PT4 (strain P125109)).